Consider the following 125-residue polypeptide: Lymphocyte antigen 6 complex locus protein G6c (125 aa).

A signal peptide spans 1 to 18; the sequence is MRALLLLSLSALLCWVSA. The UPAR/Ly6 domain occupies 20 to 111; that stretch reads IRCHSCYKLP…PRPTPALTLV (92 aa). Cystine bridges form between Cys-22/Cys-47, Cys-25/Cys-33, and Cys-39/Cys-65. Asn-88 carries N-linked (GlcNAc...) asparagine glycosylation. Cysteines 92 and 97 form a disulfide. The GPI-anchor amidated serine moiety is linked to residue Ser-99. Positions 100-125 are cleaved as a propeptide — removed in mature form; it reads PAPRPTPALTLVFLTSLAGLGLWLLH.

In terms of processing, N-glycosylated.

It is found in the cell membrane. This Bos taurus (Bovine) protein is Lymphocyte antigen 6 complex locus protein G6c (LY6G6C).